A 490-amino-acid chain; its full sequence is Betaine aldehyde dehydrogenase (490 aa).

Residues threonine 26, isoleucine 27, and aspartate 93 each contribute to the K(+) site. 150–152 (GAW) provides a ligand contact to NAD(+). The active-site Charge relay system is lysine 162. 176 to 179 (KPSE) is an NAD(+) binding site. Valine 180 is a K(+) binding site. 230-233 (GVAS) lines the NAD(+) pocket. Position 246 (leucine 246) interacts with K(+). Glutamate 252 serves as the catalytic Proton acceptor. The NAD(+) site is built by glycine 254, cysteine 286, and glutamate 387. Cysteine 286 (nucleophile) is an active-site residue. Cysteine 286 is modified (cysteine sulfenic acid (-SOH)). K(+)-binding residues include lysine 457 and glycine 460. The active-site Charge relay system is the glutamate 464.

It belongs to the aldehyde dehydrogenase family. As to quaternary structure, dimer of dimers. The cofactor is K(+).

It catalyses the reaction betaine aldehyde + NAD(+) + H2O = glycine betaine + NADH + 2 H(+). It functions in the pathway amine and polyamine biosynthesis; betaine biosynthesis via choline pathway; betaine from betaine aldehyde: step 1/1. Involved in the biosynthesis of the osmoprotectant glycine betaine. Catalyzes the irreversible oxidation of betaine aldehyde to the corresponding acid. This chain is Betaine aldehyde dehydrogenase, found in Escherichia coli O9:H4 (strain HS).